The sequence spans 212 residues: uncharacterized protein (212 aa).

The first 20 residues, 1–20 (MKNLTIGAIFLIFFAVSAFA), serve as a signal peptide directing secretion.

The protein localises to the virion. This is an uncharacterized protein from Acanthamoeba polyphaga (Amoeba).